The primary structure comprises 353 residues: Biotin synthase (353 aa).

The segment covering 1–22 (MTACSTTPTTSATSAQPAAGSP) has biased composition (low complexity). The segment at 1–30 (MTACSTTPTTSATSAQPAAGSPLQWHARPS) is disordered. A Radical SAM core domain is found at 72 to 299 (GDIELATLLS…TARVRLSAGR (228 aa)). The [4Fe-4S] cluster site is built by cysteine 87, cysteine 91, and cysteine 94. [2Fe-2S] cluster is bound by residues cysteine 131, cysteine 162, cysteine 222, and arginine 294.

The protein belongs to the radical SAM superfamily. Biotin synthase family. Homodimer. [4Fe-4S] cluster serves as cofactor. Requires [2Fe-2S] cluster as cofactor.

The enzyme catalyses (4R,5S)-dethiobiotin + (sulfur carrier)-SH + 2 reduced [2Fe-2S]-[ferredoxin] + 2 S-adenosyl-L-methionine = (sulfur carrier)-H + biotin + 2 5'-deoxyadenosine + 2 L-methionine + 2 oxidized [2Fe-2S]-[ferredoxin]. The protein operates within cofactor biosynthesis; biotin biosynthesis; biotin from 7,8-diaminononanoate: step 2/2. Its function is as follows. Catalyzes the conversion of dethiobiotin (DTB) to biotin by the insertion of a sulfur atom into dethiobiotin via a radical-based mechanism. This is Biotin synthase from Delftia acidovorans (strain DSM 14801 / SPH-1).